Consider the following 463-residue polypeptide: A-type ATP synthase subunit B (463 aa).

Belongs to the ATPase alpha/beta chains family. Has multiple subunits with at least A(3), B(3), C, D, E, F, H, I and proteolipid K(x).

The protein localises to the cell membrane. Functionally, component of the A-type ATP synthase that produces ATP from ADP in the presence of a proton gradient across the membrane. The B chain is a regulatory subunit. In Methanothermobacter thermautotrophicus (strain ATCC 29096 / DSM 1053 / JCM 10044 / NBRC 100330 / Delta H) (Methanobacterium thermoautotrophicum), this protein is A-type ATP synthase subunit B.